A 171-amino-acid chain; its full sequence is 3-hydroxyanthranilate 3,4-dioxygenase (171 aa).

R44 provides a ligand contact to O2. Residues H48, E54, and H92 each contribute to the Fe cation site. Residue E54 coordinates substrate. 2 residues coordinate substrate: R96 and E106. A divalent metal cation is bound by residues C121, C126, C160, and C163.

The protein belongs to the 3-HAO family. Requires Fe(2+) as cofactor.

Its subcellular location is the cytoplasm. It carries out the reaction 3-hydroxyanthranilate + O2 = (2Z,4Z)-2-amino-3-carboxymuconate 6-semialdehyde. It participates in cofactor biosynthesis; NAD(+) biosynthesis; quinolinate from L-kynurenine: step 3/3. Its function is as follows. Catalyzes the oxidative ring opening of 3-hydroxyanthranilate to 2-amino-3-carboxymuconate semialdehyde, which spontaneously cyclizes to quinolinate. This Yarrowia lipolytica (strain CLIB 122 / E 150) (Yeast) protein is 3-hydroxyanthranilate 3,4-dioxygenase.